The following is a 229-amino-acid chain: UPF0758 protein CA_C1241 (229 aa).

The 123-residue stretch at 107 to 229 (KITSPKEAAN…YISLKEEGLL (123 aa)) folds into the MPN domain. Zn(2+)-binding residues include His178, His180, and Asp191. A JAMM motif motif is present at residues 178-191 (HNHPSGDPKPSNED).

It belongs to the UPF0758 family.

This chain is UPF0758 protein CA_C1241, found in Clostridium acetobutylicum (strain ATCC 824 / DSM 792 / JCM 1419 / IAM 19013 / LMG 5710 / NBRC 13948 / NRRL B-527 / VKM B-1787 / 2291 / W).